The chain runs to 535 residues: Glucan 1,6-alpha-glucosidase (535 aa).

Residue Asp194 is the Nucleophile of the active site. The Proton donor role is filled by Glu236.

Belongs to the glycosyl hydrolase 13 family.

It localises to the cytoplasm. It catalyses the reaction Hydrolysis of (1-&gt;6)-alpha-D-glucosidic linkages in (1-&gt;6)-alpha-D-glucans and derived oligosaccharides.. The physiological substrates may be short isomaltosaccharides. The sequence is that of Glucan 1,6-alpha-glucosidase (dexB) from Streptococcus pneumoniae serotype 4 (strain ATCC BAA-334 / TIGR4).